The following is a 376-amino-acid chain: UDP-N-acetylglucosamine--N-acetylmuramyl-(pentapeptide) pyrophosphoryl-undecaprenol N-acetylglucosamine transferase (376 aa).

UDP-N-acetyl-alpha-D-glucosamine-binding positions include 14–16 (TGG), asparagine 128, arginine 169, serine 201, isoleucine 256, and glutamine 301.

The protein belongs to the glycosyltransferase 28 family. MurG subfamily.

The protein localises to the cell inner membrane. It carries out the reaction di-trans,octa-cis-undecaprenyl diphospho-N-acetyl-alpha-D-muramoyl-L-alanyl-D-glutamyl-meso-2,6-diaminopimeloyl-D-alanyl-D-alanine + UDP-N-acetyl-alpha-D-glucosamine = di-trans,octa-cis-undecaprenyl diphospho-[N-acetyl-alpha-D-glucosaminyl-(1-&gt;4)]-N-acetyl-alpha-D-muramoyl-L-alanyl-D-glutamyl-meso-2,6-diaminopimeloyl-D-alanyl-D-alanine + UDP + H(+). The protein operates within cell wall biogenesis; peptidoglycan biosynthesis. Its function is as follows. Cell wall formation. Catalyzes the transfer of a GlcNAc subunit on undecaprenyl-pyrophosphoryl-MurNAc-pentapeptide (lipid intermediate I) to form undecaprenyl-pyrophosphoryl-MurNAc-(pentapeptide)GlcNAc (lipid intermediate II). In Phocaeicola vulgatus (strain ATCC 8482 / DSM 1447 / JCM 5826 / CCUG 4940 / NBRC 14291 / NCTC 11154) (Bacteroides vulgatus), this protein is UDP-N-acetylglucosamine--N-acetylmuramyl-(pentapeptide) pyrophosphoryl-undecaprenol N-acetylglucosamine transferase.